A 182-amino-acid chain; its full sequence is MNRSEKPQLRATTVLGVIRNGKAALGSDGQMTLGNTVIKHSTKKIRRIQHANLITGFAGATADAVTLLDRFDEKLQAFGGQLERSAVELARDWRTDKYLRRLEAMLAVVSADKALIISGTGDVIEPEDGIVAIGSGSMYALSAARALIRYTDLSAREIVTESLKIAADICIYTNDHIVVEEV.

T12 is a catalytic residue. Residues A167, C170, and T173 each contribute to the Na(+) site.

The protein belongs to the peptidase T1B family. HslV subfamily. In terms of assembly, a double ring-shaped homohexamer of HslV is capped on each side by a ring-shaped HslU homohexamer. The assembly of the HslU/HslV complex is dependent on binding of ATP.

The protein localises to the cytoplasm. It carries out the reaction ATP-dependent cleavage of peptide bonds with broad specificity.. Its activity is regulated as follows. Allosterically activated by HslU binding. Its function is as follows. Protease subunit of a proteasome-like degradation complex believed to be a general protein degrading machinery. The protein is ATP-dependent protease subunit HslV of Prosthecochloris aestuarii (strain DSM 271 / SK 413).